Reading from the N-terminus, the 1475-residue chain is Nuclear pore complex protein Nup153 (1475 aa).

The span at 1-15 (MASGAGGVGGGGGGK) shows a compositional bias: gly residues. Disordered stretches follow at residues 1 to 37 (MASG…QQHQ), 90 to 124 (DEES…NYPD), and 171 to 225 (DSTS…TATS). An N-acetylalanine modification is found at A2. T102 is subject to Phosphothreonine. Composition is skewed to polar residues over residues 107-121 (VSNT…TASN) and 181-190 (ISTTSGFSSR). 5 positions are modified to phosphoserine: S182, S185, S192, S203, and S209. Copy 1 of the repeat occupies 236-237 (FG). Residues 236–1418 (FGTLSPSLGN…NSPSGVFTFG (1183 aa)) are 29 X 2 AA repeats of F-G. A phosphoserine mark is found at S240, S257, S297, S320, S330, S333, S334, S338, and S343. A Glycyl lysine isopeptide (Lys-Gly) (interchain with G-Cter in SUMO2) cross-link involves residue K353. A Phosphothreonine modification is found at T369. K384 bears the N6-acetyllysine mark. At T388 the chain carries Phosphothreonine. 5 positions are modified to phosphoserine: S500, S516, S518, S522, and S529. O-linked (GlcNAc) serine glycans are attached at residues S534 and S544. T588 is subject to Phosphothreonine. S607, S614, S619, and S633 each carry phosphoserine. Repeat unit 2 spans residues 652 to 653 (FG). A RanBP2-type 1 zinc finger spans residues 657–687 (KAGSSWQCDTCLLQNKVTDNKCIACQAAKLS). Zn(2+) is bound by residues C664, C667, C678, and C681. S687 is modified (phosphoserine). Residues 715 to 716 (FG) form repeat 3. Position 718 is an N6-acetyllysine (K718). Residues 722 to 751 (VIGTWDCDTCLVQNKPEAIKCVACETPKPG) form a RanBP2-type 2 zinc finger. The Zn(2+) site is built by C728, C731, C742, and C745. Repeat 4 spans residues 786–787 (FG). RanBP2-type zinc fingers lie at residues 793-822 (PIGS…EKPG) and 851-880 (PEGS…AKPG). C799, C802, C813, C816, C857, C860, C871, and C874 together coordinate Zn(2+). At S891 the chain carries Phosphoserine. Repeat 5 spans residues 905–906 (FG). 2 O-linked (GlcNAc) serine glycosylation sites follow: S908 and S909. Repeat 6 spans residues 926 to 927 (FG). K954 carries the post-translational modification N6-acetyllysine. Repeat copies occupy residues 961–962 (FG), 983–984 (FG), 1000–1001 (FG), 1024–1025 (FG), and 1084–1085 (FG). Residue S1113 is glycosylated (O-linked (GlcNAc) serine). A run of 2 repeats spans residues 1118 to 1119 (FG) and 1135 to 1136 (FG). The interval 1128–1167 (KCQPVFSFGNSEQTKDENSSKSTFSFSMTKPSEKESEQPA) is disordered. Over residues 1147–1157 (SKSTFSFSMTK) the composition is skewed to low complexity. An O-linked (GlcNAc) threonine glycan is attached at T1156. 11 repeat units span residues 1173-1174 (FG), 1212-1213 (FG), 1228-1229 (FG), 1240-1241 (FG), 1275-1276 (FG), 1289-1290 (FG), 1291-1292 (FG), 1306-1307 (FG), 1319-1320 (FG), 1327-1328 (FG), and 1341-1342 (FG). The disordered stretch occupies residues 1311-1402 (SAPSASPAFG…SAFQFGSSTT (92 aa)). Polar residues predominate over residues 1321-1335 (ANQTPTFGQSQGASQ). Composition is skewed to polar residues over residues 1343 to 1356 (SISS…TGSQ) and 1363 to 1396 (GTVS…SAFQ). Residues 1350–1475 (LFPTGSQPAP…KIKTAVRRRK (126 aa)) are (Microbial infection) Interacts with HIV-1 capsid protein p24 (CA). 5 repeat units span residues 1362-1363 (FG), 1374-1375 (FG), 1383-1384 (FG), 1397-1398 (FG), and 1417-1418 (FG). 2 stretches are compositionally biased toward polar residues: residues 1420–1431 (NSSTPAASAQPS) and 1438–1463 (FNQS…TSFS). The segment at 1420–1475 (NSSTPAASAQPSGSGGFPFNQSPAAFTVGSNGKNVFSSSGTSFSGRKIKTAVRRRK) is disordered. Phosphoserine occurs at positions 1457, 1461, and 1463. Basic residues predominate over residues 1465 to 1475 (RKIKTAVRRRK).

The protein belongs to the NUP153 family. Part of the nuclear pore complex (NPC). Interacts with TPR (via coiled coil region); the interaction is direct and provides a link between the core structure and the TPR-containing nuclear basket of the nuclear pore complex (NPC). Interacts with HIKESHI. Interacts with SENP2. Interacts with XPO5. Interacts with RAN; the interaction occurs in a GTP- and GDP-independent manner. Interacts with MCM3AP isoform GANP; this interaction is required for GANP localization at the nuclear pore complex. Interacts with MAPK1. As to quaternary structure, (Microbial infection) Interacts (via C-terminus) with HIV-1 capsid protein p24 (CA) (via N-terminus). In terms of assembly, (Microbial infection) Interacts with HIV-1 integrase; this interaction might play a role in nuclear import of HIV pre-integration complex. (Microbial infection) Interacts with hepatitis B virus capsid protein; this interaction probably plays a role in nuclear import of HBV genome. As to quaternary structure, (Microbial infection) Interacts with Epstein-barr virus BGLF4; this interaction allows BGLF4 nuclear entry. In terms of assembly, (Microbial infection) Interacts with HIV-2 virus protein vpx; this interaction might promote vpx nuclear entry. The cofactor is Zn(2+). Post-translationally, phosphorylated in interphase, hyperphosphorylated during mitosis. May play a role in the reversible disassembly of the nuclear pore complex during mitosis. Proteolytically degraded after poliovirus (PV) infection; degradation is partial and NCP- and TPR-binding domains withstand degradation. In terms of processing, O-glycosylated during cytokinesis at sites identical or close to phosphorylation sites, this interferes with the phosphorylation status.

The protein localises to the nucleus. It is found in the nucleus membrane. Its subcellular location is the nuclear pore complex. In terms of biological role, component of the nuclear pore complex (NPC), a complex required for the trafficking across the nuclear envelope. Functions as a scaffolding element in the nuclear phase of the NPC essential for normal nucleocytoplasmic transport of proteins and mRNAs. Involved in the quality control and retention of unspliced mRNAs in the nucleus; in association with TPR, regulates the nuclear export of unspliced mRNA species bearing constitutive transport element (CTE) in a NXF1- and KHDRBS1-independent manner. Mediates TPR anchoring to the nuclear membrane at NPC. The repeat-containing domain may be involved in anchoring other components of the NPC to the pore membrane. Possible DNA-binding subunit of the nuclear pore complex (NPC). (Microbial infection) Interacts with HIV-1 caspid protein P24 and thereby promotes the integration of the virus in the nucleus of non-dividing cells (in vitro). Functionally, (Microbial infection) Binds HIV-2 protein vpx and thereby promotes the nuclear translocation of the lentiviral genome (in vitro). This chain is Nuclear pore complex protein Nup153 (NUP153), found in Homo sapiens (Human).